The primary structure comprises 213 residues: Uridine kinase (213 aa).

Residue 14 to 21 participates in ATP binding; that stretch reads GASASGKS.

It belongs to the uridine kinase family.

Its subcellular location is the cytoplasm. The enzyme catalyses uridine + ATP = UMP + ADP + H(+). It catalyses the reaction cytidine + ATP = CMP + ADP + H(+). It functions in the pathway pyrimidine metabolism; CTP biosynthesis via salvage pathway; CTP from cytidine: step 1/3. It participates in pyrimidine metabolism; UMP biosynthesis via salvage pathway; UMP from uridine: step 1/1. This is Uridine kinase from Vibrio campbellii (strain ATCC BAA-1116).